The following is a 777-amino-acid chain: Zinc finger FYVE domain-containing protein 1 (777 aa).

A required for localization in the lipid droplets region spans residues methionine 416–leucine 777. 2 FYVE-type zinc fingers span residues asparagine 598–asparagine 659 and aspartate 715–glycine 775. Zn(2+) contacts are provided by cysteine 604, cysteine 607, cysteine 620, cysteine 623, cysteine 628, cysteine 631, cysteine 651, cysteine 654, cysteine 721, cysteine 724, cysteine 737, cysteine 740, cysteine 745, cysteine 748, cysteine 767, and cysteine 770.

As to quaternary structure, interacts with RAB18 (in GTP-bound form). Interacts with BSCL2 in a RAB18-dependent manner. Interacts with ZW10. Ubiquitous.

It localises to the golgi apparatus. The protein localises to the golgi stack. Its subcellular location is the endoplasmic reticulum. It is found in the preautophagosomal structure. The protein resides in the lipid droplet. It localises to the mitochondrion. Its function is as follows. Plays a role in the formation of lipid droplets (LDs) which are storage organelles at the center of lipid and energy homeostasis. Regulates the morphology, size and distribution of LDs. Mediates the formation of endoplasmic reticulum-lipid droplets (ER-LD) contact sites by forming a complex with RAB18 and ZW10. Binds to phosphatidylinositol 3-phosphate (PtdIns3P) through FYVE-type zinc finger. The sequence is that of Zinc finger FYVE domain-containing protein 1 (Zfyve1) from Mus musculus (Mouse).